A 147-amino-acid chain; its full sequence is UPF0306 protein YhbP (147 aa).

This sequence belongs to the UPF0306 family.

The protein is UPF0306 protein YhbP of Escherichia fergusonii (strain ATCC 35469 / DSM 13698 / CCUG 18766 / IAM 14443 / JCM 21226 / LMG 7866 / NBRC 102419 / NCTC 12128 / CDC 0568-73).